The chain runs to 463 residues: MPFEKTMDKIVALAKNRGFVYPGSDIYGGLANTWDYGPIGVELKNNVKKAWWQKFVHESQYNVGIDCAILMNNEVWVASGHVGNFSDPLMDCKECKSRFRADKLVEEHMTSKGVEKASADGWNNEKLKEYIDDNNIVCPDCGKTNFTDIRQFNLMFKTFQGVTEDSKAEIYLRPETAQGIFVNFKNVQRTSRKKIPFGIAQIGKAFRNEITPGNFTFRTREFEQMELEFFCEPGTDLEWHNYWKEYCWKFLLKLGIKEENIRFRVHEKEELSHYSNATSDIEYLFPFGWGELWGIADRTDYDLTQHQNRSGKDMTYLNPVTNERYIPYCIEPSVGADRAVLAFLVDAYDEEELEGGDVRTVMHFHPAIAPFKVAILPLSKKLSEKALDVYNMLRKDFNVDYDDAGSIGKRYRREDEIGTPYCITIDFDTMDNDTVTIRDRDTMKQFRVKIDELKDFIKEKIQF.

The substrate site is built by R100 and E175. ATP is bound by residues 207-209 (RNE), 217-222 (FRTREF), 291-292 (EL), and 335-338 (GADR). Substrate is bound at residue 222-226 (FEQME). 331 to 335 (EPSVG) contributes to the substrate binding site.

Belongs to the class-II aminoacyl-tRNA synthetase family. As to quaternary structure, homodimer.

Its subcellular location is the cytoplasm. The catalysed reaction is tRNA(Gly) + glycine + ATP = glycyl-tRNA(Gly) + AMP + diphosphate. Functionally, catalyzes the attachment of glycine to tRNA(Gly). The protein is Glycine--tRNA ligase of Clostridium kluyveri (strain NBRC 12016).